The primary structure comprises 61 residues: Sperm protamine P1 (61 aa).

The disordered stretch occupies residues 1–61 (MARYRHSRSR…RRYSRRRRRY (61 aa)).

It belongs to the protamine P1 family. As to expression, testis.

It is found in the nucleus. Its subcellular location is the chromosome. In terms of biological role, protamines substitute for histones in the chromatin of sperm during the haploid phase of spermatogenesis. They compact sperm DNA into a highly condensed, stable and inactive complex. In Potorous longipes (Long-footed potoroo), this protein is Sperm protamine P1 (PRM1).